A 214-amino-acid polypeptide reads, in one-letter code: Probable transaldolase (214 aa).

The active-site Schiff-base intermediate with substrate is K83.

It belongs to the transaldolase family. Type 3B subfamily.

It localises to the cytoplasm. It carries out the reaction D-sedoheptulose 7-phosphate + D-glyceraldehyde 3-phosphate = D-erythrose 4-phosphate + beta-D-fructose 6-phosphate. It functions in the pathway carbohydrate degradation; pentose phosphate pathway; D-glyceraldehyde 3-phosphate and beta-D-fructose 6-phosphate from D-ribose 5-phosphate and D-xylulose 5-phosphate (non-oxidative stage): step 2/3. Its function is as follows. Transaldolase is important for the balance of metabolites in the pentose-phosphate pathway. This Streptococcus equi subsp. zooepidemicus (strain H70) protein is Probable transaldolase.